We begin with the raw amino-acid sequence, 205 residues long: LexA repressor (205 aa).

A DNA-binding region (H-T-H motif) is located at residues 28–48 (RAEIATRLGFKSANAAEEHLK). Catalysis depends on for autocatalytic cleavage activity residues Ser-122 and Lys-159.

Belongs to the peptidase S24 family. In terms of assembly, homodimer.

The catalysed reaction is Hydrolysis of Ala-|-Gly bond in repressor LexA.. In terms of biological role, represses a number of genes involved in the response to DNA damage (SOS response), including recA and lexA. In the presence of single-stranded DNA, RecA interacts with LexA causing an autocatalytic cleavage which disrupts the DNA-binding part of LexA, leading to derepression of the SOS regulon and eventually DNA repair. The protein is LexA repressor of Shewanella denitrificans (strain OS217 / ATCC BAA-1090 / DSM 15013).